The following is a 218-amino-acid chain: Cytochrome b6 (218 aa).

Residues I35–F55 form a helical membrane-spanning segment. A heme c-binding site is contributed by C38. H89 and H103 together coordinate heme b. The next 3 helical transmembrane spans lie at A93–F113, L119–Y139, and L189–I209. Residues H190 and H205 each coordinate heme b.

This sequence belongs to the cytochrome b family. PetB subfamily. In terms of assembly, the 4 large subunits of the cytochrome b6-f complex are cytochrome b6, subunit IV (17 kDa polypeptide, PetD), cytochrome f and the Rieske protein, while the 4 small subunits are PetG, PetL, PetM and PetN. The complex functions as a dimer. Heme b is required as a cofactor. Heme c serves as cofactor.

Its subcellular location is the cellular thylakoid membrane. In terms of biological role, component of the cytochrome b6-f complex, which mediates electron transfer between photosystem II (PSII) and photosystem I (PSI), cyclic electron flow around PSI, and state transitions. This chain is Cytochrome b6, found in Prochlorococcus marinus (strain MIT 9215).